Reading from the N-terminus, the 320-residue chain is Cytochrome f (320 aa).

A signal peptide spans 1–35 (MQTRKTFSWIKEQIARSISVSLLIYIITRTSISSA). Tyr36, Cys56, Cys59, and His60 together coordinate heme. The chain crosses the membrane as a helical span at residues 286-306 (VQGLLFFLASVILAQIFLVLK).

Belongs to the cytochrome f family. As to quaternary structure, the 4 large subunits of the cytochrome b6-f complex are cytochrome b6, subunit IV (17 kDa polypeptide, petD), cytochrome f and the Rieske protein, while the 4 small subunits are PetG, PetL, PetM and PetN. The complex functions as a dimer. The cofactor is heme.

The protein resides in the plastid. It localises to the chloroplast thylakoid membrane. Its function is as follows. Component of the cytochrome b6-f complex, which mediates electron transfer between photosystem II (PSII) and photosystem I (PSI), cyclic electron flow around PSI, and state transitions. In Jasminum nudiflorum (Winter jasmine), this protein is Cytochrome f.